Consider the following 192-residue polypeptide: Inosine triphosphate pyrophosphatase (192 aa).

10 to 15 contacts ITP; the sequence is TGNANK. Glu-43 lines the Mg(2+) pocket. Residues Lys-56, 74-75, Lys-91, 149-152, Lys-173, and 178-179 each bind ITP; these read DT, FGWD, and HR.

This sequence belongs to the HAM1 NTPase family. Homodimer. Mg(2+) is required as a cofactor. It depends on Mn(2+) as a cofactor.

The protein localises to the cytoplasm. The protein resides in the nucleus. The enzyme catalyses ITP + H2O = IMP + diphosphate + H(+). It catalyses the reaction dITP + H2O = dIMP + diphosphate + H(+). The catalysed reaction is XTP + H2O = XMP + diphosphate + H(+). Pyrophosphatase that hydrolyzes non-canonical purine nucleotides such as inosine triphosphate (ITP), deoxyinosine triphosphate (dITP) or xanthosine 5'-triphosphate (XTP) to their respective monophosphate derivatives. The enzyme does not distinguish between the deoxy- and ribose forms. Probably excludes non-canonical purines from RNA and DNA precursor pools, thus preventing their incorporation into RNA and DNA and avoiding chromosomal lesions. This chain is Inosine triphosphate pyrophosphatase, found in Candida glabrata (strain ATCC 2001 / BCRC 20586 / JCM 3761 / NBRC 0622 / NRRL Y-65 / CBS 138) (Yeast).